The following is a 402-amino-acid chain: S-adenosylmethionine synthase (402 aa).

137 to 142 (GQGSAD) serves as a coordination point for ATP.

This sequence belongs to the AdoMet synthase 2 family. Mg(2+) is required as a cofactor.

It carries out the reaction L-methionine + ATP + H2O = S-adenosyl-L-methionine + phosphate + diphosphate. The protein operates within amino-acid biosynthesis; S-adenosyl-L-methionine biosynthesis; S-adenosyl-L-methionine from L-methionine: step 1/1. Functionally, catalyzes the formation of S-adenosylmethionine from methionine and ATP. The chain is S-adenosylmethionine synthase from Pyrobaculum neutrophilum (strain DSM 2338 / JCM 9278 / NBRC 100436 / V24Sta) (Thermoproteus neutrophilus).